Reading from the N-terminus, the 1073-residue chain is Lon protease homolog, mitochondrial (1073 aa).

Residues Met-1–Asn-27 constitute a mitochondrion transit peptide. 2 stretches are compositionally biased toward basic and acidic residues: residues Phe-69–Ile-107 and Tyr-113–Pro-123. A disordered region spans residues Phe-69–Ala-173. The span at Ser-132–Asn-150 shows a compositional bias: low complexity. Basic and acidic residues predominate over residues Asp-158–Phe-167. The Lon N-terminal domain maps to Pro-177 to Ala-395. Gly-543–Thr-550 serves as a coordination point for ATP. Basic and acidic residues predominate over residues Ser-775–Ala-785. Residues Ser-775 to Ile-821 are disordered. Residues Ile-790–Thr-805 are compositionally biased toward polar residues. Positions Glu-806–Ile-821 are enriched in basic and acidic residues. The region spanning Thr-856–Gly-1044 is the Lon proteolytic domain. Catalysis depends on residues Ser-950 and Lys-993.

It belongs to the peptidase S16 family. In terms of assembly, homohexamer or homoheptamer. Organized in a ring with a central cavity.

Its subcellular location is the mitochondrion matrix. The catalysed reaction is Hydrolysis of proteins in presence of ATP.. In terms of biological role, ATP-dependent serine protease that mediates the selective degradation of misfolded, unassembled or oxidatively damaged polypeptides as well as certain short-lived regulatory proteins in the mitochondrial matrix. May also have a chaperone function in the assembly of inner membrane protein complexes. Participates in the regulation of mitochondrial gene expression and in the maintenance of the integrity of the mitochondrial genome. Binds to mitochondrial DNA in a site-specific manner. This is Lon protease homolog, mitochondrial from Candida dubliniensis (strain CD36 / ATCC MYA-646 / CBS 7987 / NCPF 3949 / NRRL Y-17841) (Yeast).